The sequence spans 129 residues: Small ribosomal subunit protein uS11 (129 aa).

This sequence belongs to the universal ribosomal protein uS11 family. Part of the 30S ribosomal subunit. Interacts with proteins S7 and S18. Binds to IF-3.

Functionally, located on the platform of the 30S subunit, it bridges several disparate RNA helices of the 16S rRNA. Forms part of the Shine-Dalgarno cleft in the 70S ribosome. The polypeptide is Small ribosomal subunit protein uS11 (Photobacterium profundum (strain SS9)).